A 336-amino-acid polypeptide reads, in one-letter code: Ketol-acid reductoisomerase (NADP(+)) (336 aa).

Residues A2–T182 form the KARI N-terminal Rossmann domain. NADP(+) contacts are provided by residues Y25 to Q28, S51, S53, and D83 to Q86. The active site involves H108. G134 is a binding site for NADP(+). The region spanning T183–T328 is the KARI C-terminal knotted domain. 4 residues coordinate Mg(2+): D191, E195, E227, and E231. Position 252 (S252) interacts with substrate.

The protein belongs to the ketol-acid reductoisomerase family. The cofactor is Mg(2+).

The catalysed reaction is (2R)-2,3-dihydroxy-3-methylbutanoate + NADP(+) = (2S)-2-acetolactate + NADPH + H(+). The enzyme catalyses (2R,3R)-2,3-dihydroxy-3-methylpentanoate + NADP(+) = (S)-2-ethyl-2-hydroxy-3-oxobutanoate + NADPH + H(+). It participates in amino-acid biosynthesis; L-isoleucine biosynthesis; L-isoleucine from 2-oxobutanoate: step 2/4. Its pathway is amino-acid biosynthesis; L-valine biosynthesis; L-valine from pyruvate: step 2/4. In terms of biological role, involved in the biosynthesis of branched-chain amino acids (BCAA). Catalyzes an alkyl-migration followed by a ketol-acid reduction of (S)-2-acetolactate (S2AL) to yield (R)-2,3-dihydroxy-isovalerate. In the isomerase reaction, S2AL is rearranged via a Mg-dependent methyl migration to produce 3-hydroxy-3-methyl-2-ketobutyrate (HMKB). In the reductase reaction, this 2-ketoacid undergoes a metal-dependent reduction by NADPH to yield (R)-2,3-dihydroxy-isovalerate. The polypeptide is Ketol-acid reductoisomerase (NADP(+)) (Lachnoclostridium phytofermentans (strain ATCC 700394 / DSM 18823 / ISDg) (Clostridium phytofermentans)).